The chain runs to 467 residues: Spermatogenesis- and oogenesis-specific basic helix-loop-helix-containing protein 2 (467 aa).

The region spanning 200 to 251 (QASFLHSTKEKLRRERIKSCCEQLRTLLPYVKGRKSDVASVIEATVDYVKQV) is the bHLH domain. Low complexity predominate over residues 443–453 (ASASDHQASQP). The tract at residues 443-467 (ASASDHQASQPPALPSPQPHDSSYF) is disordered.

Forms both hetero- and homodimers with SOHLH1. Preferentially expressed in the adult ovary and testis. Expressed in the majority of spermatogonia in adult animals, but not in the most undifferentiated spermatogonial population.

Its subcellular location is the nucleus. The protein resides in the cytoplasm. In terms of biological role, transcription regulator of both male and female germline differentiation. Suppresses genes involved in spermatogonial stem cells maintenance, and induces genes important for spermatogonial differentiation. Coordinates oocyte differentiation without affecting meiosis I. The chain is Spermatogenesis- and oogenesis-specific basic helix-loop-helix-containing protein 2 (Sohlh2) from Mus musculus (Mouse).